We begin with the raw amino-acid sequence, 331 residues long: Adenosine deaminase (331 aa).

Histidine 12 and histidine 14 together coordinate Zn(2+). The substrate site is built by histidine 14 and aspartate 16. Histidine 197 serves as a coordination point for Zn(2+). Catalysis depends on glutamate 200, which acts as the Proton donor. Aspartate 278 serves as a coordination point for Zn(2+).

It belongs to the metallo-dependent hydrolases superfamily. Adenosine and AMP deaminases family. Adenosine deaminase subfamily. Zn(2+) serves as cofactor.

The catalysed reaction is adenosine + H2O + H(+) = inosine + NH4(+). The enzyme catalyses 2'-deoxyadenosine + H2O + H(+) = 2'-deoxyinosine + NH4(+). Functionally, catalyzes the hydrolytic deamination of adenosine and 2-deoxyadenosine. The chain is Adenosine deaminase from Shewanella pealeana (strain ATCC 700345 / ANG-SQ1).